Consider the following 332-residue polypeptide: Phospho-N-acetylmuramoyl-pentapeptide-transferase (332 aa).

The next 8 helical transmembrane spans lie at 9 to 29 (IYTI…IIPF), 55 to 75 (TIGG…AGLI), 79 to 99 (LWVA…DDFI), 115 to 135 (MSLQ…ISVM), 155 to 175 (IPQY…VVVA), 196 to 216 (IVAA…LAIF), 253 to 273 (AVAI…IYFA), and 312 to 332 (VVIV…LGLN).

It belongs to the glycosyltransferase 4 family. MraY subfamily. The cofactor is Mg(2+).

Its subcellular location is the cell membrane. It catalyses the reaction UDP-N-acetyl-alpha-D-muramoyl-L-alanyl-gamma-D-glutamyl-meso-2,6-diaminopimeloyl-D-alanyl-D-alanine + di-trans,octa-cis-undecaprenyl phosphate = di-trans,octa-cis-undecaprenyl diphospho-N-acetyl-alpha-D-muramoyl-L-alanyl-D-glutamyl-meso-2,6-diaminopimeloyl-D-alanyl-D-alanine + UMP. Its pathway is cell wall biogenesis; peptidoglycan biosynthesis. Its function is as follows. Catalyzes the initial step of the lipid cycle reactions in the biosynthesis of the cell wall peptidoglycan: transfers peptidoglycan precursor phospho-MurNAc-pentapeptide from UDP-MurNAc-pentapeptide onto the lipid carrier undecaprenyl phosphate, yielding undecaprenyl-pyrophosphoryl-MurNAc-pentapeptide, known as lipid I. This Alkaliphilus oremlandii (strain OhILAs) (Clostridium oremlandii (strain OhILAs)) protein is Phospho-N-acetylmuramoyl-pentapeptide-transferase.